Here is a 230-residue protein sequence, read N- to C-terminus: CRP-like protein Clp (230 aa).

A nucleoside 3',5'-cyclic phosphate is bound at residue 18–139 (PSLTLDAGTI…APRILYAIGV (122 aa)). Positions 158–230 (LDVTDRIVRT…GKTVVLYGTR (73 aa)) constitute an HTH crp-type domain. Residues 190–209 (RQELARLVGCSREMAGRVLK) constitute a DNA-binding region (H-T-H motif).

As to quaternary structure, homodimer.

It is found in the cytoplasm. Its activity is regulated as follows. Allosterically inhibited by cyclic di-GMP (c-di-GMP), which binds to Clp and abolishes its ability to bind its target gene promoter. Its function is as follows. Global transcriptional regulator that regulates virulence factors production by activating or repressing the expression of a large set of genes in diffusible signal factor (DSF) pathway. The protein is CRP-like protein Clp (clp) of Xanthomonas campestris pv. campestris (strain 8004).